Here is a 61-residue protein sequence, read N- to C-terminus: Large ribosomal subunit protein uL30 (61 aa).

The protein belongs to the universal ribosomal protein uL30 family. In terms of assembly, part of the 50S ribosomal subunit.

The polypeptide is Large ribosomal subunit protein uL30 (Colwellia psychrerythraea (strain 34H / ATCC BAA-681) (Vibrio psychroerythus)).